The sequence spans 303 residues: Cysteine synthase B (303 aa).

The residue at position 41 (Lys41) is an N6-(pyridoxal phosphate)lysine. Residues Asn71, 174–178 (GTTGT), and Ser255 each bind pyridoxal 5'-phosphate.

Belongs to the cysteine synthase/cystathionine beta-synthase family. It depends on pyridoxal 5'-phosphate as a cofactor.

It catalyses the reaction O-acetyl-L-serine + hydrogen sulfide = L-cysteine + acetate. It participates in amino-acid biosynthesis; L-cysteine biosynthesis; L-cysteine from L-serine: step 2/2. In terms of biological role, two cysteine synthase enzymes are found. Both catalyze the same reaction. Cysteine synthase B can also use thiosulfate in place of sulfide to give cysteine thiosulfonate as a product. The polypeptide is Cysteine synthase B (cysM) (Salmonella typhimurium (strain LT2 / SGSC1412 / ATCC 700720)).